Consider the following 311-residue polypeptide: Energy-coupling factor transporter ATP-binding protein EcfA2 (311 aa).

Positions 3 to 265 (IKLKDVKFTF…IAFLEENNLQ (263 aa)) constitute an ABC transporter domain. 40–47 (GQTGSGKT) is an ATP binding site.

This sequence belongs to the ABC transporter superfamily. Energy-coupling factor EcfA family. Forms a stable energy-coupling factor (ECF) transporter complex composed of 2 membrane-embedded substrate-binding proteins (S component), 2 ATP-binding proteins (A component) and 2 transmembrane proteins (T component).

It is found in the cell membrane. Functionally, ATP-binding (A) component of a common energy-coupling factor (ECF) ABC-transporter complex. Unlike classic ABC transporters this ECF transporter provides the energy necessary to transport a number of different substrates. This chain is Energy-coupling factor transporter ATP-binding protein EcfA2, found in Mycoplasmopsis synoviae (strain 53) (Mycoplasma synoviae).